We begin with the raw amino-acid sequence, 152 residues long: Large ribosomal subunit protein bL9 (152 aa).

It belongs to the bacterial ribosomal protein bL9 family.

Functionally, binds to the 23S rRNA. This chain is Large ribosomal subunit protein bL9, found in Mycobacterium sp. (strain JLS).